We begin with the raw amino-acid sequence, 610 residues long: Butyryl-CoA dehydrogenase Swol_2052 (610 aa).

Glu-451 acts as the Proton acceptor in catalysis.

The protein belongs to the acyl-CoA dehydrogenase family. FAD is required as a cofactor.

It localises to the cytoplasm. It catalyses the reaction butanoyl-CoA + oxidized [electron-transfer flavoprotein] + H(+) = (2E)-butenoyl-CoA + reduced [electron-transfer flavoprotein]. The enzyme catalyses a short-chain 2,3-saturated fatty acyl-CoA + oxidized [electron-transfer flavoprotein] + H(+) = a short-chain (2E)-enoyl-CoA + reduced [electron-transfer flavoprotein]. It functions in the pathway lipid metabolism; butanoate metabolism. Functionally, involved in syntrophic growth of S.wolfei with butyrate, as part of the butyrate oxidation pathway. Catalyzes the oxidation of butanoyl-CoA to crotonyl-CoA. Probably passes the electrons released by this reaction on to electron-transfer flavoproteins (EtfAB) to finally generate hydrogen and/or formate. In Syntrophomonas wolfei subsp. wolfei (strain DSM 2245B / Goettingen), this protein is Butyryl-CoA dehydrogenase Swol_2052.